Consider the following 150-residue polypeptide: UPF0756 membrane protein APL_0366 (150 aa).

4 consecutive transmembrane segments (helical) span residues 12–34 (LVVL…ATVL), 52–72 (HGLS…IVSG), 82–102 (FLNW…WLGG), and 123–143 (IIGV…AGIL).

This sequence belongs to the UPF0756 family.

The protein resides in the cell membrane. This is UPF0756 membrane protein APL_0366 from Actinobacillus pleuropneumoniae serotype 5b (strain L20).